The following is a 277-amino-acid chain: Large ribosomal subunit protein uL15c (277 aa).

The N-terminal 67 residues, 1-67 (MATPLSISSN…FARPLVVVSQ (67 aa)), are a transit peptide targeting the chloroplast. The residue at position 68 (threonine 68) is an N-acetylthreonine. The disordered stretch occupies residues 81 to 125 (FRLDNLGPQPGSRKKQKRKGRGISAGQGASCGFGMRGQKSRSGPG). Over residues 92-101 (SRKKQKRKGR) the composition is skewed to basic residues. Positions 103-115 (ISAGQGASCGFGM) are enriched in gly residues.

This sequence belongs to the universal ribosomal protein uL15 family. In terms of assembly, part of the 50S ribosomal subunit.

It localises to the plastid. The protein resides in the chloroplast. The polypeptide is Large ribosomal subunit protein uL15c (RPL15) (Arabidopsis thaliana (Mouse-ear cress)).